The primary structure comprises 394 residues: Purine ribonucleoside efflux pump NepI (394 aa).

Residues 1 to 21 (MSEFIAENRGADAITRPNWSA) are Cytoplasmic-facing. A helical membrane pass occupies residues 22–42 (VFSVAFCVACLIIVEFLPVSL). Residues 43–54 (LTPMAQDLGISE) lie on the Periplasmic side of the membrane. The helical transmembrane segment at 55 to 75 (GVAGQSVTVTAFVAMFASLFI) threads the bilayer. Topologically, residues 76–85 (TQTIQATDRR) are cytoplasmic. A helical transmembrane segment spans residues 86 to 106 (YVVILFAVLLTISCLLVSFAN). A topological domain (periplasmic) is located at residue serine 107. Residues 108–128 (FSLLLIGRACLGLALGGFWAM) form a helical membrane-spanning segment. At 129-147 (SASLTMRLVPPRTVPKALS) the chain is on the cytoplasmic side. Residues 148-168 (VIFGAVSIALVIAAPLGSFLG) form a helical membrane-spanning segment. Over 169 to 175 (ELIGWRN) the chain is Periplasmic. Residues 176–196 (VFNAAAVMGVLCIFWIIKSLP) form a helical membrane-spanning segment. Residues 197 to 215 (SLPGKPSHQKQNTFRLLQR) lie on the Cytoplasmic side of the membrane. The helical transmembrane segment at 216–236 (PGVMAGMIAIFMSFAGQFAFF) threads the bilayer. Residues 237-255 (TYIRPVYMNLAGFGVDGLT) are Periplasmic-facing. Residues 256–276 (LVLLSFGIASFIGTSLSSFIL) traverse the membrane as a helical segment. The Cytoplasmic segment spans residues 277-281 (KRSVK). A helical transmembrane segment spans residues 282–302 (LALAGAPLILAVSALVLTLCG). Residues 303–305 (SDK) are Periplasmic-facing. The chain crosses the membrane as a helical span at residues 306–326 (IVATGVAIIWGLTFALVPVGW). Topologically, residues 327 to 343 (STWSTRSLADQAEKAGS) are cytoplasmic. Residues 344–364 (IQVAVIQLANTCGAAIGGYAL) form a helical membrane-spanning segment. At 365–366 (DN) the chain is on the periplasmic side. A helical membrane pass occupies residues 367 to 387 (IGLTSPLMLSGTLMLLTALLV). At 388–394 (TAKVKMK) the chain is on the cytoplasmic side.

Belongs to the major facilitator superfamily. DHA1 family. NepI (TC 2.A.1.2.26) subfamily.

The protein resides in the cell inner membrane. The enzyme catalyses inosine(in) + H(+)(out) = inosine(out) + H(+)(in). The catalysed reaction is guanosine(in) + H(+)(out) = guanosine(out) + H(+)(in). In terms of biological role, involved in the efflux of purine ribonucleosides, such as inosine and guanosine. The sequence is that of Purine ribonucleoside efflux pump NepI from Shigella dysenteriae serotype 1 (strain Sd197).